Here is a 163-residue protein sequence, read N- to C-terminus: Thiol peroxidase (163 aa).

Residues L16–N162 enclose the Thioredoxin domain. Residue C58 is the Cysteine sulfenic acid (-SOH) intermediate of the active site. A disulfide bridge connects residues C58 and C92.

Belongs to the peroxiredoxin family. Tpx subfamily. Homodimer.

The enzyme catalyses a hydroperoxide + [thioredoxin]-dithiol = an alcohol + [thioredoxin]-disulfide + H2O. In terms of biological role, thiol-specific peroxidase that catalyzes the reduction of hydrogen peroxide and organic hydroperoxides to water and alcohols, respectively. Plays a role in cell protection against oxidative stress by detoxifying peroxides. The protein is Thiol peroxidase of Streptococcus gordonii.